Reading from the N-terminus, the 85-residue chain is U4-theraphotoxin-Hhn1a (85 aa).

Residues M1–A22 form the signal peptide. Positions E23–R48 are excised as a propeptide. Disulfide bonds link C52/C66, C56/C77, and C71/C82.

The protein belongs to the neurotoxin 12 (Hwtx-2) family. 02 (Hwtx-2) subfamily. As to quaternary structure, monomer. As to expression, expressed by the venom gland.

Its subcellular location is the secreted. Its function is as follows. Neurotoxin active on both insects and mammals. The chain is U4-theraphotoxin-Hhn1a from Cyriopagopus hainanus (Chinese bird spider).